The chain runs to 420 residues: Carboxypeptidase A4 (420 aa).

An N-terminal signal peptide occupies residues 1-16 (MKWLLFFGALIGAGIC). A propeptide spans 17–113 (GRDKFFGDQV…EMQHNEGIER (97 aa)) (activation peptide). 7 residues coordinate a protein: Pro69, Val71, Asn118, Tyr122, His123, Glu126, and Phe162. The 295-residue stretch at 121–415 (AYHPLEAIYH…LGLKTIMEHV (295 aa)) folds into the Peptidase M14 domain. 2 residues coordinate Zn(2+): His180 and Glu183. A disulfide bridge connects residues Cys249 and Cys272. Asn259 carries an N-linked (GlcNAc...) asparagine glycan. Residue His307 participates in Zn(2+) binding. The active-site Proton donor/acceptor is Glu381.

The protein belongs to the peptidase M14 family. Interacts with LXN. Zn(2+) serves as cofactor.

Its subcellular location is the secreted. In terms of biological role, metalloprotease that cleaves hydrophobic C-terminal residues with a preference for -Phe, -Leu, -Ile, -Met, -Tyr and -Val. May function in peptide hormone and/or neuropeptide catabolism. The chain is Carboxypeptidase A4 (Cpa4) from Mus musculus (Mouse).